Reading from the N-terminus, the 169-residue chain is Small proline-rich protein 3 (169 aa).

The span at 1–24 shows a compositional bias: low complexity; the sequence is MSSYQQKQTFTPPPQLQQQQVKQP. Residues 1–57 are disordered; the sequence is MSSYQQKQTFTPPPQLQQQQVKQPSQPPPQEIFVPTTKEPCHSKVPQPGNTKIPEPG. Ser2 is subject to N-acetylserine. A run of 14 repeats spans residues 43–50, 51–58, 59–66, 67–74, 75–82, 83–90, 91–98, 99–106, 107–114, 115–122, 123–130, 131–138, 139–146, and 147–154. A 14 X 8 AA approximate tandem repeats region spans residues 43 to 154; sequence SKVPQPGNTK…GYTKLPEPCP (112 aa). The tract at residues 150 to 169 is disordered; that stretch reads PEPCPSTVTPGPAQQKTKQK. Over residues 155-169 the composition is skewed to polar residues; sequence STVTPGPAQQKTKQK.

The protein resides in the cytoplasm. In terms of biological role, cross-linked envelope protein of keratinocytes. The protein is Small proline-rich protein 3 (SPRR3) of Homo sapiens (Human).